Reading from the N-terminus, the 300-residue chain is 33 kDa chaperonin (300 aa).

Disulfide bonds link cysteine 235-cysteine 237 and cysteine 269-cysteine 272.

Belongs to the HSP33 family. Post-translationally, under oxidizing conditions two disulfide bonds are formed involving the reactive cysteines. Under reducing conditions zinc is bound to the reactive cysteines and the protein is inactive.

It is found in the cytoplasm. Redox regulated molecular chaperone. Protects both thermally unfolding and oxidatively damaged proteins from irreversible aggregation. Plays an important role in the bacterial defense system toward oxidative stress. This chain is 33 kDa chaperonin, found in Pseudomonas syringae pv. tomato (strain ATCC BAA-871 / DC3000).